Reading from the N-terminus, the 195-residue chain is CASP-like protein 1B2 (195 aa).

Residues 1–25 (MDLEKGKKPSEQAAACRIMQVKDKL) lie on the Cytoplasmic side of the membrane. The helical transmembrane segment at 26–46 (ITLQPVVRACVFLATAVAAVI) threads the bilayer. Residues 47–78 (MGLNKQSYTTVVAIVGTRPVTQTFTAKFKDTP) are Extracellular-facing. A helical transmembrane segment spans residues 79 to 99 (AFVFFVIANAIASGYNLMVLV). The Cytoplasmic portion of the chain corresponds to 100–114 (TRRILQRRAQSLSVH). The helical transmembrane segment at 115–135 (LLDMVILTLLATGSATAASMA) threads the bilayer. The Extracellular portion of the chain corresponds to 136–160 (QLGKNGNLHARWNPICDKFGSFCNH). A helical membrane pass occupies residues 161 to 181 (GGIALVSSFIGVALMLALNLL). Residues 182 to 195 (SAAANSPRSNVTGQ) are Cytoplasmic-facing.

Belongs to the Casparian strip membrane proteins (CASP) family. Homodimer and heterodimers.

The protein localises to the cell membrane. In Oryza sativa subsp. indica (Rice), this protein is CASP-like protein 1B2.